Consider the following 213-residue polypeptide: Macrodontain-1 (213 aa).

3 disulfides stabilise this stretch: C23/C63, C57/C96, and C153/C201. Residue C26 is part of the active site. Catalysis depends on residues H159 and N176.

In terms of assembly, monomer. In terms of tissue distribution, fruits.

Inhibited by the general cysteine protease inhibitor E64 (L-trans-epoxysuccinyl-leucylamide-(4-guanido)-butane). In terms of biological role, cysteine protease that catalyzes the preferential cleavage: Ala-|-Xaa &gt; Gln-|-Xaa &gt; Tyr-Xaa &gt;&gt; Leu-|-Xaa &gt; Gly-|-Xaa. Hydrolyzes the synthetic peptide substrate Bz-Phe-Val-Arg-pNA. The sequence is that of Macrodontain-1 from Ananas macrodontes (False pineapple).